The chain runs to 443 residues: ATP-dependent protease ATPase subunit HslU (443 aa).

ATP-binding positions include isoleucine 18, 60-65, aspartate 256, glutamate 321, and arginine 393; that span reads GVGKTE.

It belongs to the ClpX chaperone family. HslU subfamily. A double ring-shaped homohexamer of HslV is capped on each side by a ring-shaped HslU homohexamer. The assembly of the HslU/HslV complex is dependent on binding of ATP.

Its subcellular location is the cytoplasm. In terms of biological role, ATPase subunit of a proteasome-like degradation complex; this subunit has chaperone activity. The binding of ATP and its subsequent hydrolysis by HslU are essential for unfolding of protein substrates subsequently hydrolyzed by HslV. HslU recognizes the N-terminal part of its protein substrates and unfolds these before they are guided to HslV for hydrolysis. This chain is ATP-dependent protease ATPase subunit HslU, found in Salmonella typhi.